We begin with the raw amino-acid sequence, 488 residues long: Cobyric acid synthase (488 aa).

A GATase cobBQ-type domain is found at 252 to 440 (VPLIAVLRFP…VHGLFANDRQ (189 aa)). The active-site Nucleophile is the Cys334. The active site involves His432.

It belongs to the CobB/CobQ family. CobQ subfamily.

Its pathway is cofactor biosynthesis; adenosylcobalamin biosynthesis. In terms of biological role, catalyzes amidations at positions B, D, E, and G on adenosylcobyrinic A,C-diamide. NH(2) groups are provided by glutamine, and one molecule of ATP is hydrogenolyzed for each amidation. The chain is Cobyric acid synthase from Methylorubrum populi (strain ATCC BAA-705 / NCIMB 13946 / BJ001) (Methylobacterium populi).